We begin with the raw amino-acid sequence, 822 residues long: MAAKPEQDCKTAAALIRAGSLIEGVESAGKDFLVWTTQGPAVKKDPDLLFSLCRVLPGSTQQTLKLQQVEPTADSQELTVQAKEVWQANPGIDPLTYGDIGGLPHTNEPCVLDFLARRYQSKVIYTTAEPLIVAVNPFQDLKNAGPDTIALYRDAPDVDKLPPHVFYASRRAMTNMHQLKKPQTIIVSGESGAGKTETTKMLMKYLATSAGGNLDLKIQTAIMAANPVLEAFGNAKTVRNNNSSRFGRFMLLDVAREGGIQHGKVVAFLLEKSRIVCQDKDERNYHIFYQFLKGAPGHMRQRYMLQPLEAYTFINPHCLDAPGIVDTEDFEQTVKSLESMNMTETETCTIWSIVSGVLLMGNAKPTGKTEAGVENAACFVGESEAALRNACSLLFLDYPSILHELTVKTTYAGSNKIESRWTVPDSEMLRASLAKGMFEQLFLWIIRKLNADIEPKGGSFDVFMGLLDIFGFEVFQNNSLEQLFINITNEVLQRNFTDIVFEKELQLYSKEGISSKKIEYTTNEKLIETLLGKGTSVLAALEDQCISPSGTDEKFVSSLASKLAGNKCFIPSKNTKSLEFTVVHTIGKVIYNADGFAFKNKDVLRPEIIEITRASTNDVVRGLFEGVKVEKGKMAKGMLIGSQFMTQLKGLMEVIQKTESHFIRCIKPNDDKVPLKWVNSKVLIQLHALSILEALHLRQLAFSYRRTFEEFAAQFRFINLGVSNKPGADAKTICVELLKSTSISADEYALGKTMVFLKPQAAKMLVRLQREALSAWEPLVGVFEGMTVLKRAKQLSTGRAVPATRICANVRRKLVQAGIKVC.

In terms of domain architecture, Myosin motor spans 95–770; it reads LTYGDIGGLP…AAKMLVRLQR (676 aa). ATP is bound at residue 189–196; sequence GESGAGKT. The interval 660–670 is actin-binding; it reads SHFIRCIKPND. The tract at residues 772–822 is tail; sequence ALSAWEPLVGVFEGMTVLKRAKQLSTGRAVPATRICANVRRKLVQAGIKVC.

Belongs to the TRAFAC class myosin-kinesin ATPase superfamily. Myosin family.

It is found in the cell membrane. The protein localises to the cytoplasm. In terms of biological role, myosins are actin-based motor molecules with ATPase activity. Unconventional myosins serve in intracellular movements. Their highly divergent tails are presumed to bind to membranous compartments, which would be moved relative to actin filaments. The protein is Myosin-D of Toxoplasma gondii.